The primary structure comprises 306 residues: Protease HtpX homolog (306 aa).

2 consecutive transmembrane segments (helical) span residues 10–30 (TTLL…ATGG) and 33–53 (QTLS…YWFS). H135 provides a ligand contact to Zn(2+). E136 is an active-site residue. Position 139 (H139) interacts with Zn(2+). 2 consecutive transmembrane segments (helical) span residues 149-169 (AIAS…MYFG) and 181-201 (GLGL…ASLI). E210 serves as a coordination point for Zn(2+).

The protein belongs to the peptidase M48B family. It depends on Zn(2+) as a cofactor.

The protein resides in the cell membrane. This is Protease HtpX homolog from Bifidobacterium longum (strain NCC 2705).